Reading from the N-terminus, the 145-residue chain is Neuromedin-S (145 aa).

A signal peptide spans Met-1–Gly-25. 3 propeptides span residues Phe-26–Arg-64, Phe-65–Arg-100, and Met-101–Thr-103. The residue at position 136 (Asn-136) is an Asparagine amide. The propeptide occupies Asn-139–Trp-145.

Belongs to the NmU family.

Its subcellular location is the secreted. Implicated in the regulation of circadian rhythms through autocrine and/or paracrine actions. The chain is Neuromedin-S (NMS) from Bos taurus (Bovine).